Consider the following 990-residue polypeptide: Kinesin-related protein 5 (990 aa).

Positions 6 to 330 constitute a Kinesin motor domain; sequence NIRVMCRFRP…LKFGARAKSI (325 aa). 83-90 is a binding site for ATP; the sequence is GQTGSGKT. 2 disordered regions span residues 401-485 and 732-788; these read QSNS…SSID and FSSS…QDQQ. The span at 406–418 shows a compositional bias: gly residues; the sequence is SGGGGSGSSGGSS. Composition is skewed to low complexity over residues 466–485 and 733–781; these read TSSI…SSID and SSSN…PSSN. Positions 513-948 form a coiled coil; it reads IEMEKMKEDT…DQLISTQRLI (436 aa).

Belongs to the TRAFAC class myosin-kinesin ATPase superfamily. Kinesin family. Kinesin subfamily. In terms of assembly, interacts with actin.

Its subcellular location is the cytoplasm. The protein resides in the cytoskeleton. Functionally, microtubule-associated force-producing protein that plays a role in organelle transport. Its motor activity is directed toward the microtubule's plus end. May connect microtubules to actin filaments. Associates with actin-based structures in cells and is likely involved in the organization of actin cytoskeletons in such structures. The sequence is that of Kinesin-related protein 5 (kif5) from Dictyostelium discoideum (Social amoeba).